Here is a 490-residue protein sequence, read N- to C-terminus: GTPase Der (490 aa).

EngA-type G domains are found at residues 3-166 (PVIA…PKDE) and 196-369 (IKIA…KSAV). GTP-binding positions include 9 to 16 (GRPNVGKS), 56 to 60 (DTGGI), 118 to 121 (NKID), 202 to 209 (GRPNVGKS), 249 to 253 (DTAGV), and 314 to 317 (NKWD). The KH-like domain occupies 370-454 (TRWPTSRLTQ…PIRIEFKGGE (85 aa)). Residues 452–490 (GGENPYEGNKNTLTDRQVNKKRRMMSHHKKADKKRRDKR) form a disordered region. Residues 470 to 490 (NKKRRMMSHHKKADKKRRDKR) show a composition bias toward basic residues.

Belongs to the TRAFAC class TrmE-Era-EngA-EngB-Septin-like GTPase superfamily. EngA (Der) GTPase family. In terms of assembly, associates with the 50S ribosomal subunit.

Functionally, GTPase that plays an essential role in the late steps of ribosome biogenesis. The chain is GTPase Der from Pseudomonas savastanoi pv. phaseolicola (strain 1448A / Race 6) (Pseudomonas syringae pv. phaseolicola (strain 1448A / Race 6)).